A 502-amino-acid polypeptide reads, in one-letter code: ATP synthase subunit alpha (502 aa).

The segment at 115-135 is disordered; it reads VDGLGPINTTNTRPIESPAPG. 169–176 lines the ATP pocket; that stretch reads GDRQTGKT.

This sequence belongs to the ATPase alpha/beta chains family. As to quaternary structure, F-type ATPases have 2 components, CF(1) - the catalytic core - and CF(0) - the membrane proton channel. CF(1) has five subunits: alpha(3), beta(3), gamma(1), delta(1), epsilon(1). CF(0) has three main subunits: a(1), b(2) and c(9-12). The alpha and beta chains form an alternating ring which encloses part of the gamma chain. CF(1) is attached to CF(0) by a central stalk formed by the gamma and epsilon chains, while a peripheral stalk is formed by the delta and b chains.

The protein localises to the cell membrane. It carries out the reaction ATP + H2O + 4 H(+)(in) = ADP + phosphate + 5 H(+)(out). Its function is as follows. Produces ATP from ADP in the presence of a proton gradient across the membrane. The alpha chain is a regulatory subunit. This chain is ATP synthase subunit alpha, found in Bacillus cereus (strain G9842).